Here is a 381-residue protein sequence, read N- to C-terminus: Chaperone protein DnaJ (381 aa).

A J domain is found at 5–70 (DYYDVLGVSK…EKKAAYDRFG (66 aa)). Residues 140-218 (GLQKTINVPT…CRGQGRVEKD (79 aa)) form a CR-type zinc finger. Residues cysteine 153, cysteine 156, cysteine 170, cysteine 173, cysteine 192, cysteine 195, cysteine 206, and cysteine 209 each coordinate Zn(2+). CXXCXGXG motif repeat units follow at residues 153–160 (CSSCEGTG), 170–177 (CPTCSGMG), 192–199 (CPTCSGLG), and 206–213 (CKSCRGQG).

Belongs to the DnaJ family. Homodimer. The cofactor is Zn(2+).

The protein localises to the cytoplasm. Functionally, participates actively in the response to hyperosmotic and heat shock by preventing the aggregation of stress-denatured proteins and by disaggregating proteins, also in an autonomous, DnaK-independent fashion. Unfolded proteins bind initially to DnaJ; upon interaction with the DnaJ-bound protein, DnaK hydrolyzes its bound ATP, resulting in the formation of a stable complex. GrpE releases ADP from DnaK; ATP binding to DnaK triggers the release of the substrate protein, thus completing the reaction cycle. Several rounds of ATP-dependent interactions between DnaJ, DnaK and GrpE are required for fully efficient folding. Also involved, together with DnaK and GrpE, in the DNA replication of plasmids through activation of initiation proteins. This Ruegeria pomeroyi (strain ATCC 700808 / DSM 15171 / DSS-3) (Silicibacter pomeroyi) protein is Chaperone protein DnaJ.